The primary structure comprises 827 residues: 4-hydroxy-3-methylbut-2-enyl diphosphate reductase (827 aa).

The tract at residues 1–284 (MEIIRAKHMG…MNIEKKVRGI (284 aa)) is 4-hydroxy-3-methylbut-2-enyl diphosphate reductase. Residue Cys12 coordinates [4Fe-4S] cluster. (2E)-4-hydroxy-3-methylbut-2-enyl diphosphate contacts are provided by His40 and His79. The dimethylallyl diphosphate site is built by His40 and His79. Isopentenyl diphosphate is bound by residues His40 and His79. Residue Cys101 coordinates [4Fe-4S] cluster. His129 is a (2E)-4-hydroxy-3-methylbut-2-enyl diphosphate binding site. His129 lines the dimethylallyl diphosphate pocket. His129 contributes to the isopentenyl diphosphate binding site. Glu131 (proton donor) is an active-site residue. Thr168 is a binding site for (2E)-4-hydroxy-3-methylbut-2-enyl diphosphate. Cys196 contributes to the [4Fe-4S] cluster binding site. 4 residues coordinate (2E)-4-hydroxy-3-methylbut-2-enyl diphosphate: Ser224, Ser225, Asn226, and Ser268. Residues Ser224, Ser225, Asn226, and Ser268 each contribute to the dimethylallyl diphosphate site. Isopentenyl diphosphate-binding residues include Ser224, Ser225, Asn226, and Ser268. 4 S1 motif domains span residues 477–545 (GQIV…LSIK), 562–632 (DDEI…LGIK), 649–716 (DTVI…GSLK), and 733–802 (GTTV…LSIK).

In the N-terminal section; belongs to the IspH family. [4Fe-4S] cluster is required as a cofactor.

The catalysed reaction is isopentenyl diphosphate + 2 oxidized [2Fe-2S]-[ferredoxin] + H2O = (2E)-4-hydroxy-3-methylbut-2-enyl diphosphate + 2 reduced [2Fe-2S]-[ferredoxin] + 2 H(+). The enzyme catalyses dimethylallyl diphosphate + 2 oxidized [2Fe-2S]-[ferredoxin] + H2O = (2E)-4-hydroxy-3-methylbut-2-enyl diphosphate + 2 reduced [2Fe-2S]-[ferredoxin] + 2 H(+). Its pathway is isoprenoid biosynthesis; dimethylallyl diphosphate biosynthesis; dimethylallyl diphosphate from (2E)-4-hydroxy-3-methylbutenyl diphosphate: step 1/1. It participates in isoprenoid biosynthesis; isopentenyl diphosphate biosynthesis via DXP pathway; isopentenyl diphosphate from 1-deoxy-D-xylulose 5-phosphate: step 6/6. In terms of biological role, catalyzes the conversion of 1-hydroxy-2-methyl-2-(E)-butenyl 4-diphosphate (HMBPP) into a mixture of isopentenyl diphosphate (IPP) and dimethylallyl diphosphate (DMAPP). Acts in the terminal step of the DOXP/MEP pathway for isoprenoid precursor biosynthesis. The sequence is that of 4-hydroxy-3-methylbut-2-enyl diphosphate reductase from Fusobacterium nucleatum subsp. nucleatum (strain ATCC 25586 / DSM 15643 / BCRC 10681 / CIP 101130 / JCM 8532 / KCTC 2640 / LMG 13131 / VPI 4355).